The sequence spans 430 residues: Adenylosuccinate synthetase (430 aa).

Residues 12–18 (GDEGKGK) and 40–42 (GHT) each bind GTP. Aspartate 13 functions as the Proton acceptor in the catalytic mechanism. 2 residues coordinate Mg(2+): aspartate 13 and glycine 40. IMP contacts are provided by residues 13–16 (DEGK), 38–41 (NAGH), threonine 130, arginine 144, glutamine 224, and threonine 239. Histidine 41 acts as the Proton donor in catalysis. A disordered region spans residues 277 to 298 (PFPTEQDNETGRKIGERGREFG). Residues 285 to 296 (ETGRKIGERGRE) are compositionally biased toward basic and acidic residues. Substrate is bound at residue 299–305 (TNTGRPR). Position 303 (arginine 303) interacts with IMP. GTP contacts are provided by residues arginine 305, 331 to 333 (KLD), and 413 to 415 (STS).

It belongs to the adenylosuccinate synthetase family. Homodimer. It depends on Mg(2+) as a cofactor.

It localises to the cytoplasm. The catalysed reaction is IMP + L-aspartate + GTP = N(6)-(1,2-dicarboxyethyl)-AMP + GDP + phosphate + 2 H(+). The protein operates within purine metabolism; AMP biosynthesis via de novo pathway; AMP from IMP: step 1/2. Plays an important role in the de novo pathway of purine nucleotide biosynthesis. Catalyzes the first committed step in the biosynthesis of AMP from IMP. In Bradyrhizobium sp. (strain BTAi1 / ATCC BAA-1182), this protein is Adenylosuccinate synthetase.